The chain runs to 323 residues: tRNA U34 carboxymethyltransferase (323 aa).

Residues Lys90, Trp104, Lys109, Gly129, Ile182 to Glu183, Met197, Tyr201, and Arg316 each bind carboxy-S-adenosyl-L-methionine.

Belongs to the class I-like SAM-binding methyltransferase superfamily. CmoB family. As to quaternary structure, homotetramer.

The catalysed reaction is carboxy-S-adenosyl-L-methionine + 5-hydroxyuridine(34) in tRNA = 5-carboxymethoxyuridine(34) in tRNA + S-adenosyl-L-homocysteine + H(+). Functionally, catalyzes carboxymethyl transfer from carboxy-S-adenosyl-L-methionine (Cx-SAM) to 5-hydroxyuridine (ho5U) to form 5-carboxymethoxyuridine (cmo5U) at position 34 in tRNAs. In Idiomarina loihiensis (strain ATCC BAA-735 / DSM 15497 / L2-TR), this protein is tRNA U34 carboxymethyltransferase.